The chain runs to 120 residues: NAD(P)H-quinone oxidoreductase subunit 3, chloroplastic (120 aa).

3 helical membrane passes run 9 to 29, 64 to 84, and 88 to 108; these read IFWAFLIISSAIPILAFLISG, MFALVFVVLDVETVFLYPWAM, and VLGVPVFIEAFIFVLILIVGS.

This sequence belongs to the complex I subunit 3 family. NDH is composed of at least 16 different subunits, 5 of which are encoded in the nucleus.

The protein resides in the plastid. The protein localises to the chloroplast thylakoid membrane. It carries out the reaction a plastoquinone + NADH + (n+1) H(+)(in) = a plastoquinol + NAD(+) + n H(+)(out). The catalysed reaction is a plastoquinone + NADPH + (n+1) H(+)(in) = a plastoquinol + NADP(+) + n H(+)(out). Its function is as follows. NDH shuttles electrons from NAD(P)H:plastoquinone, via FMN and iron-sulfur (Fe-S) centers, to quinones in the photosynthetic chain and possibly in a chloroplast respiratory chain. The immediate electron acceptor for the enzyme in this species is believed to be plastoquinone. Couples the redox reaction to proton translocation, and thus conserves the redox energy in a proton gradient. The chain is NAD(P)H-quinone oxidoreductase subunit 3, chloroplastic from Gossypium barbadense (Sea Island cotton).